The sequence spans 328 residues: Ribosomal RNA small subunit methyltransferase H (328 aa).

Residues 35-37 (GSH), Asp60, Phe87, Asp113, and Gln120 contribute to the S-adenosyl-L-methionine site.

Belongs to the methyltransferase superfamily. RsmH family.

Its subcellular location is the cytoplasm. The catalysed reaction is cytidine(1402) in 16S rRNA + S-adenosyl-L-methionine = N(4)-methylcytidine(1402) in 16S rRNA + S-adenosyl-L-homocysteine + H(+). Its function is as follows. Specifically methylates the N4 position of cytidine in position 1402 (C1402) of 16S rRNA. This chain is Ribosomal RNA small subunit methyltransferase H, found in Chlorobium chlorochromatii (strain CaD3).